Consider the following 312-residue polypeptide: Transcription initiation factor IIB 1 (312 aa).

The TFIIB-type zinc-finger motif lies at 12-43 (EIERCPECGSTNLIRDYEHGELVCGECGAVIE). 4 residues coordinate Zn(2+): Cys16, Cys19, Cys35, and Cys38. 2 consecutive repeat copies span residues 129-212 (QELE…SRYL) and 223-304 (DYIS…ELTE).

It belongs to the TFIIB family.

Its function is as follows. Stabilizes TBP binding to an archaeal box-A promoter. Also responsible for recruiting RNA polymerase II to the pre-initiation complex (DNA-TBP-TFIIB). This is Transcription initiation factor IIB 1 from Thermoplasma volcanium (strain ATCC 51530 / DSM 4299 / JCM 9571 / NBRC 15438 / GSS1).